The chain runs to 334 residues: Ornithine carbamoyltransferase (334 aa).

Residues 56–59 (STRT), glutamine 83, arginine 107, and 134–137 (HPTQ) each bind carbamoyl phosphate. Residues asparagine 168, aspartate 232, and 236 to 237 (SM) each bind L-ornithine. Residues 274 to 275 (CL) and arginine 320 each bind carbamoyl phosphate.

The protein belongs to the aspartate/ornithine carbamoyltransferase superfamily. OTCase family.

The protein localises to the cytoplasm. It catalyses the reaction carbamoyl phosphate + L-ornithine = L-citrulline + phosphate + H(+). Its pathway is amino-acid biosynthesis; L-arginine biosynthesis; L-arginine from L-ornithine and carbamoyl phosphate: step 1/3. Reversibly catalyzes the transfer of the carbamoyl group from carbamoyl phosphate (CP) to the N(epsilon) atom of ornithine (ORN) to produce L-citrulline. The protein is Ornithine carbamoyltransferase of Escherichia coli O157:H7.